Here is a 266-residue protein sequence, read N- to C-terminus: Glucosamine-6-phosphate deaminase (266 aa).

The Proton acceptor; for enolization step role is filled by D72. The active-site For ring-opening step is D141. The Proton acceptor; for ring-opening step role is filled by H143. E148 functions as the For ring-opening step in the catalytic mechanism.

The protein belongs to the glucosamine/galactosamine-6-phosphate isomerase family. NagB subfamily. As to quaternary structure, homohexamer.

The catalysed reaction is alpha-D-glucosamine 6-phosphate + H2O = beta-D-fructose 6-phosphate + NH4(+). It functions in the pathway amino-sugar metabolism; N-acetylneuraminate degradation; D-fructose 6-phosphate from N-acetylneuraminate: step 5/5. With respect to regulation, allosterically activated by N-acetylglucosamine 6-phosphate (GlcNAc6P). Catalyzes the reversible isomerization-deamination of glucosamine 6-phosphate (GlcN6P) to form fructose 6-phosphate (Fru6P) and ammonium ion. This Aeromonas salmonicida (strain A449) protein is Glucosamine-6-phosphate deaminase.